Reading from the N-terminus, the 94-residue chain is Acylphosphatase (94 aa).

Positions 8-94 (ALHVIVKGRV…RGYTDFRIEV (87 aa)) constitute an Acylphosphatase-like domain. Catalysis depends on residues Arg23 and Asn41.

Belongs to the acylphosphatase family.

The catalysed reaction is an acyl phosphate + H2O = a carboxylate + phosphate + H(+). This chain is Acylphosphatase (acyP), found in Treponema denticola (strain ATCC 35405 / DSM 14222 / CIP 103919 / JCM 8153 / KCTC 15104).